The following is a 349-amino-acid chain: Protein BCCIP homolog (349 aa).

Residues 1–10 (MGRVFKKKGG) show a composition bias toward basic residues. A disordered region spans residues 1 to 65 (MGRVFKKKGG…DDEEEDEDEQ (65 aa)). The segment covering 11 to 33 (AKREAEEEKQEELVMRKKLRKEE) has biased composition (basic and acidic residues). Residues 34-65 (EPEPVEDVEEDEDVSDEDDEDIDDEEEDEDEQ) are compositionally biased toward acidic residues.

The protein belongs to the BCP1 family.

This Caenorhabditis elegans protein is Protein BCCIP homolog.